The following is a 304-amino-acid chain: MIVRPQQHWLRRIFVWHGSVLSKISSRLLLNFLFSIAVIFMLPWYTHLGIKFTLAPFSILGVAIAIFLGFRNNAGYARYVEARKLWGQLMIASRSLLREVKTTLPDSASVREFARLQIAFAHCLRMTLRKQPQAEVLAHYLKTEDLQRVLASNSPANRILLIMGEWLAVQRRNGQLSDILFISLNDRLNDISAVLAGCERIAYTPIPFAYTLILHRTVYLFCIMLPFALVVDLHYMTPFISVLISYTFISLDCLAEELEDPFGTENNDLPLDAICNAIEIDLLQMNDEAEIPAKILPDRHYQLT.

The next 4 membrane-spanning stretches (helical) occupy residues leucine 28–leucine 48, isoleucine 50–phenylalanine 70, valine 194–leucine 214, and leucine 220–isoleucine 240.

It belongs to the anion channel-forming bestrophin (TC 1.A.46) family.

The protein localises to the cell membrane. In Escherichia coli (strain K12), this protein is Voltage-dependent anion channel-forming protein YneE (yneE).